The following is a 2698-amino-acid chain: Chromodomain-helicase-DNA-binding protein 6 (2698 aa).

Composition is skewed to basic and acidic residues over residues 1-12 (MKMKIQKKEKQL), 100-115 (EPGEQEGTKASKDREP), and 122-171 (EPKE…KRSC). The tract at residues 1 to 243 (MKMKIQKKEK…KRRSGRQVKR (243 aa)) is disordered. The interval 1–746 (MKMKIQKKEK…MMELRKCCNH (746 aa)) is required for DNA-dependent ATPase activity. The span at 213-224 (QSLPNPSLQSPE) shows a compositional bias: low complexity. Chromo domains lie at 291–342 (NIIE…KDPR) and 374–438 (IEID…KPVE). The Helicase ATP-binding domain maps to 472–646 (LFNWYNRKNC…FSLLNFLEPS (175 aa)). An ATP-binding site is contributed by 485-492 (DEMGLGKT). The short motif at 597–600 (DEAH) is the DEAH box element. Residues 786–955 (LIDKLLPKLI…LSKMEVEDLL (170 aa)) enclose the Helicase C-terminal domain. Residues 1318-1370 (SLSAEQGVTDGTSDIPERGNIDKEDSAEDKVDGLQKQTASPSDGSDGIFGEKK) form a disordered region. The span at 1320–1329 (SAEQGVTDGT) shows a compositional bias: polar residues. The span at 1332-1350 (IPERGNIDKEDSAEDKVDG) shows a compositional bias: basic and acidic residues. The Myb-like domain occupies 1435 to 1489 (RWTRREQADFYRTVSSFGVVYDQEKEAFDWTQFRAISRLDKKSDENLEHYFHSFV). Over residues 1707–1730 (EPRSFQEAPSTNMQSRKKTVTVSA) the composition is skewed to polar residues. Residues 1707-1731 (EPRSFQEAPSTNMQSRKKTVTVSAS) form a disordered region. Residue Ser-1852 is modified to Phosphoserine. Disordered regions lie at residues 1935–2046 (GLGS…ASGI), 2111–2137 (LPTPVLSSSAGSRSSLSEPEATEHSFS), 2308–2337 (TTLNTTHPEGPGAASSASEPTAAASSQAEK), 2359–2387 (PGFGASFSDKPKQRRPRCKEPGKLDIGSL), 2538–2587 (ASLA…PTIT), and 2626–2698 (QGRH…DDTN). 3 stretches are compositionally biased toward basic and acidic residues: residues 1943–1955 (GEKPKAYEPDPYR), 1975–1991 (FKLKHELLKEPWKESSE), and 2004–2024 (SEPKSEEMDFENKDDYEKDGA). Composition is skewed to low complexity over residues 2117 to 2127 (SSSAGSRSSLS) and 2315 to 2336 (PEGPGAASSASEPTAAASSQAE). Over residues 2538-2550 (ASLASTKSGASAT) the composition is skewed to low complexity. A compositionally biased stretch (basic and acidic residues) spans 2552 to 2573 (KTTEDELSGRDVKADSLVEDKP). Polar residues-rich tracts occupy residues 2578 to 2587 (FSDQSEPTIT) and 2664 to 2675 (SDQNCTESSVTV). Over residues 2677–2698 (PEREHVAQAREEGLKDSNDDTN) the composition is skewed to basic and acidic residues.

This sequence belongs to the SNF2/RAD54 helicase family. As to quaternary structure, interacts with NFE2L2; involved in activation of the transcription. May interact with PPARA. As to expression, widely expressed.

It localises to the nucleus. The protein localises to the nucleoplasm. The catalysed reaction is ATP + H2O = ADP + phosphate + H(+). ATP-dependent chromatin-remodeling factor. Regulates transcription by disrupting nucleosomes in a largely non-sliding manner which strongly increases the accessibility of chromatin. Activates transcription of specific genes in response to oxidative stress through interaction with NFE2L2. In Rattus norvegicus (Rat), this protein is Chromodomain-helicase-DNA-binding protein 6 (Chd6).